We begin with the raw amino-acid sequence, 431 residues long: Serine hydroxymethyltransferase (431 aa).

Residue 121-123 participates in (6S)-5,6,7,8-tetrahydrofolate binding; that stretch reads AHV. K227 bears the N6-(pyridoxal phosphate)lysine mark.

This sequence belongs to the SHMT family. As to quaternary structure, homodimer. Pyridoxal 5'-phosphate serves as cofactor.

The protein localises to the cytoplasm. It functions in the pathway amino-acid biosynthesis; glycine biosynthesis; glycine from L-serine: step 1/1. Its function is as follows. Catalyzes the reversible interconversion of serine and glycine with a modified folate serving as the one-carbon carrier. Also exhibits a pteridine-independent aldolase activity toward beta-hydroxyamino acids, producing glycine and aldehydes, via a retro-aldol mechanism. The sequence is that of Serine hydroxymethyltransferase from Metallosphaera sedula (strain ATCC 51363 / DSM 5348 / JCM 9185 / NBRC 15509 / TH2).